The chain runs to 157 residues: MKILGIDPGSRNCGYAIIEKNVRKTALIEAGLIKIKPNTLQYQITELCEGLDVIFKNHKFDEVAIEDIFFAYNPKTVLKLAQFRGALSLKILQLHGDFAEYTPLQVKKAVTGKAKAQKEQVAFMVKKILGITKEIKPLDITDAIAVALTHANNLCLR.

Active-site residues include Asp-7, Glu-66, and Asp-139. Mg(2+) contacts are provided by Asp-7, Glu-66, and Asp-139.

This sequence belongs to the RuvC family. As to quaternary structure, homodimer which binds Holliday junction (HJ) DNA. The HJ becomes 2-fold symmetrical on binding to RuvC with unstacked arms; it has a different conformation from HJ DNA in complex with RuvA. In the full resolvosome a probable DNA-RuvA(4)-RuvB(12)-RuvC(2) complex forms which resolves the HJ. Mg(2+) is required as a cofactor.

The protein resides in the cytoplasm. It catalyses the reaction Endonucleolytic cleavage at a junction such as a reciprocal single-stranded crossover between two homologous DNA duplexes (Holliday junction).. Functionally, the RuvA-RuvB-RuvC complex processes Holliday junction (HJ) DNA during genetic recombination and DNA repair. Endonuclease that resolves HJ intermediates. Cleaves cruciform DNA by making single-stranded nicks across the HJ at symmetrical positions within the homologous arms, yielding a 5'-phosphate and a 3'-hydroxyl group; requires a central core of homology in the junction. The consensus cleavage sequence is 5'-(A/T)TT(C/G)-3'. Cleavage occurs on the 3'-side of the TT dinucleotide at the point of strand exchange. HJ branch migration catalyzed by RuvA-RuvB allows RuvC to scan DNA until it finds its consensus sequence, where it cleaves and resolves the cruciform DNA. In Campylobacter curvus (strain 525.92), this protein is Crossover junction endodeoxyribonuclease RuvC.